The sequence spans 262 residues: Adenosylcobinamide-GDP ribazoletransferase (262 aa).

The next 6 helical transmembrane spans lie at 11 to 31 (LNLFFVATGFFTRLPTPSWVI), 43 to 63 (YFGLVGLLIGLICALVYWFTQ), 66 to 86 (LPTSVAVLLAMVAGVLVTGGF), 121 to 141 (AIVLALILLLRWQLLVELALF), 146 to 166 (AITGFIVAHTLSRVLAASLIF), and 199 to 219 (IFVLFWLNGLAAFVLFISLWA).

The protein belongs to the CobS family. Requires Mg(2+) as cofactor.

Its subcellular location is the cell inner membrane. It carries out the reaction alpha-ribazole + adenosylcob(III)inamide-GDP = adenosylcob(III)alamin + GMP + H(+). The catalysed reaction is alpha-ribazole 5'-phosphate + adenosylcob(III)inamide-GDP = adenosylcob(III)alamin 5'-phosphate + GMP + H(+). Its pathway is cofactor biosynthesis; adenosylcobalamin biosynthesis; adenosylcobalamin from cob(II)yrinate a,c-diamide: step 7/7. In terms of biological role, joins adenosylcobinamide-GDP and alpha-ribazole to generate adenosylcobalamin (Ado-cobalamin). Also synthesizes adenosylcobalamin 5'-phosphate from adenosylcobinamide-GDP and alpha-ribazole 5'-phosphate. The sequence is that of Adenosylcobinamide-GDP ribazoletransferase from Shewanella denitrificans (strain OS217 / ATCC BAA-1090 / DSM 15013).